A 169-amino-acid polypeptide reads, in one-letter code: Small ribosomal subunit protein bS18c (169 aa).

The interval 1-61 is disordered; sequence MYTSKQPFLK…RRPRIGPGDR (61 aa). Residues 27–55 are compositionally biased toward basic residues; that stretch reads QTFRKSKQTFRKFKQPFRKSKQPFRRRPR.

It belongs to the bacterial ribosomal protein bS18 family. As to quaternary structure, part of the 30S ribosomal subunit.

The protein localises to the plastid. It localises to the chloroplast. The chain is Small ribosomal subunit protein bS18c from Agrostis stolonifera (Creeping bentgrass).